We begin with the raw amino-acid sequence, 317 residues long: Pantothenate kinase (317 aa).

An ATP-binding site is contributed by 99 to 106 (GSVSVGKS).

The protein belongs to the prokaryotic pantothenate kinase family.

The protein resides in the cytoplasm. The catalysed reaction is (R)-pantothenate + ATP = (R)-4'-phosphopantothenate + ADP + H(+). Its pathway is cofactor biosynthesis; coenzyme A biosynthesis; CoA from (R)-pantothenate: step 1/5. The protein is Pantothenate kinase of Histophilus somni (strain 2336) (Haemophilus somnus).